A 317-amino-acid chain; its full sequence is Serpentine receptor class delta-26 (317 aa).

Transmembrane regions (helical) follow at residues 5-25 (LLHTVLSVTGVTLNAFMMYLA), 38-58 (AIITIKTFTDILTSAMSFFVM), 83-103 (ACYVGHMFMLCFLECNLIWMI), 122-142 (SLVFVALCLSIPSFIHMAAWI), 176-196 (ITLILQLFITSVLVLIAYAWI), 227-247 (FQVFLPTFIFLGFFIFAAMFG), and 258-278 (LVSIAFMFSPICSPFSYILFV).

It belongs to the nematode receptor-like protein srd family.

The protein resides in the membrane. The polypeptide is Serpentine receptor class delta-26 (srd-26) (Caenorhabditis elegans).